The chain runs to 504 residues: Catalase (504 aa).

The interval 1 to 25 is disordered; that stretch reads MSKQDGKLTGLFGAPVSDRENSMTA. Active-site residues include His56 and Asn129. Position 339 (Tyr339) interacts with heme.

The protein belongs to the catalase family. As to quaternary structure, homodimer. Heme is required as a cofactor.

It carries out the reaction 2 H2O2 = O2 + 2 H2O. Its function is as follows. Decomposes hydrogen peroxide into water and oxygen; serves to protect cells from the toxic effects of hydrogen peroxide. In Staphylococcus epidermidis (strain ATCC 35984 / DSM 28319 / BCRC 17069 / CCUG 31568 / BM 3577 / RP62A), this protein is Catalase (katA).